Reading from the N-terminus, the 206-residue chain is Small ribosomal subunit protein uS4 (206 aa).

One can recognise an S4 RNA-binding domain in the interval 96–156 (RRLDNVVYRM…DKSKNQSRIK (61 aa)).

It belongs to the universal ribosomal protein uS4 family. Part of the 30S ribosomal subunit. Contacts protein S5. The interaction surface between S4 and S5 is involved in control of translational fidelity.

In terms of biological role, one of the primary rRNA binding proteins, it binds directly to 16S rRNA where it nucleates assembly of the body of the 30S subunit. Functionally, with S5 and S12 plays an important role in translational accuracy. The sequence is that of Small ribosomal subunit protein uS4 from Buchnera aphidicola subsp. Schizaphis graminum (strain Sg).